A 381-amino-acid polypeptide reads, in one-letter code: Creatine kinase M-type (381 aa).

The region spanning 11–98 is the Phosphagen kinase N-terminal domain; that stretch reads KLKFSAEEEF…FDPVIQDRHG (88 aa). Residues 99 to 118 form a disordered region; that stretch reads GYKPTDKHRTDLNHENLKGG. The Phosphagen kinase C-terminal domain occupies 125–367; it reads YVLSSRVRTG…KLMVEMEKKL (243 aa). Residues 128 to 132, histidine 191, arginine 236, arginine 292, 320 to 325, and aspartate 335 contribute to the ATP site; these read SSRVR and RGTGGV.

This sequence belongs to the ATP:guanido phosphotransferase family. In terms of assembly, dimer of identical or non-identical chains, which can be either B (brain type) or M (muscle type). With MM being the major form in skeletal muscle and myocardium, MB existing in myocardium, and BB existing in many tissues, especially brain. As to expression, predominantly found in skeletal muscle, but not in the heart.

The protein resides in the cytoplasm. The catalysed reaction is creatine + ATP = N-phosphocreatine + ADP + H(+). Functionally, reversibly catalyzes the transfer of phosphate between ATP and various phosphogens (e.g. creatine phosphate). Creatine kinase isoenzymes play a central role in energy transduction in tissues with large, fluctuating energy demands, such as skeletal muscle, heart, brain and spermatozoa. In Gallus gallus (Chicken), this protein is Creatine kinase M-type.